A 601-amino-acid chain; its full sequence is Glutathione-regulated potassium-efflux system protein KefB (601 aa).

The next 13 helical transmembrane spans lie at 4–24, 29–49, 55–75, 87–107, 115–135, 152–172, 177–197, 207–227, 230–250, 262–282, 284–304, 324–344, and 356–376; these read SDFL…VPLA, IGAV…GLGF, EILH…GLEL, IFGV…GLLM, AAVV…LQLM, VLLF…LLAG, HFDW…LIGG, FIAA…LVLG, LFMD…GVLL, AIDP…GMSL, LGVL…LVAV, MQFA…FSTA, and ALLL…MKLV. One can recognise an RCK N-terminal domain in the interval 400–519; that stretch reads KPQVIVVGFG…AGVTQFSRET (120 aa).

It belongs to the monovalent cation:proton antiporter 2 (CPA2) transporter (TC 2.A.37) family. KefB subfamily. In terms of assembly, interacts with the regulatory subunit KefG.

The protein localises to the cell inner membrane. Functionally, pore-forming subunit of a potassium efflux system that confers protection against electrophiles. Catalyzes K(+)/H(+) antiport. The protein is Glutathione-regulated potassium-efflux system protein KefB of Shigella boydii serotype 18 (strain CDC 3083-94 / BS512).